The following is an 85-amino-acid chain: MVGNMNREALFKTLTTGYLHFWSLSRKKLWLKGETSGNFQIIEEFKVDCDADAVLFKVTSLGPICHTGNYTCFYRSYDELVNSKS.

Aspartate 48 is a binding site for Mg(2+). Position 49 (cysteine 49) interacts with Zn(2+). Mg(2+) contacts are provided by aspartate 50 and aspartate 52. The Zn(2+) site is built by cysteine 65 and cysteine 72.

Belongs to the PRA-CH family. As to quaternary structure, homodimer. Requires Mg(2+) as cofactor. It depends on Zn(2+) as a cofactor.

It is found in the cytoplasm. The catalysed reaction is 1-(5-phospho-beta-D-ribosyl)-5'-AMP + H2O = 1-(5-phospho-beta-D-ribosyl)-5-[(5-phospho-beta-D-ribosylamino)methylideneamino]imidazole-4-carboxamide. It functions in the pathway amino-acid biosynthesis; L-histidine biosynthesis; L-histidine from 5-phospho-alpha-D-ribose 1-diphosphate: step 3/9. In terms of biological role, catalyzes the hydrolysis of the adenine ring of phosphoribosyl-AMP. This chain is Phosphoribosyl-AMP cyclohydrolase (hisI), found in Saccharolobus solfataricus (strain ATCC 35092 / DSM 1617 / JCM 11322 / P2) (Sulfolobus solfataricus).